We begin with the raw amino-acid sequence, 180 residues long: Dual-action ribosomal maturation protein DarP (180 aa).

It belongs to the DarP family.

Its subcellular location is the cytoplasm. Its function is as follows. Member of a network of 50S ribosomal subunit biogenesis factors which assembles along the 30S-50S interface, preventing incorrect 23S rRNA structures from forming. Promotes peptidyl transferase center (PTC) maturation. The sequence is that of Dual-action ribosomal maturation protein DarP from Chromobacterium violaceum (strain ATCC 12472 / DSM 30191 / JCM 1249 / CCUG 213 / NBRC 12614 / NCIMB 9131 / NCTC 9757 / MK).